The sequence spans 373 residues: UDP-glucose 4-epimerase 3 (373 aa).

27–58 (SVLVTGGAGYIGTHTVLRLLEKGFAVTVVDNF) serves as a coordination point for NAD(+). Residue serine 153 coordinates substrate. Tyrosine 177 functions as the Proton acceptor in the catalytic mechanism.

Belongs to the NAD(P)-dependent epimerase/dehydratase family. Requires NAD(+) as cofactor.

The catalysed reaction is UDP-alpha-D-glucose = UDP-alpha-D-galactose. Its pathway is carbohydrate metabolism; galactose metabolism. Catalyzes the interconversion between UDP-glucose and UDP-galactose. The sequence is that of UDP-glucose 4-epimerase 3 (UGE-3) from Oryza sativa subsp. japonica (Rice).